The following is a 372-amino-acid chain: MKQLPVLEPGDKPRKATWYTLTVPGDSPCARVGHSCSYLPPVGNAKRGKVFIVGGANPNRSFSDVHTMDLGKHQWDLDTCKGLLPRYEHASFIPSCTPDRIWVFGGANQSGNRNCLQVLNPETRTWTTPEVTSPPPSPRTFHTSSAAIGNQLYVFGGGERGAQPVQDTKLHVFDANTLTWSQPETLGNPPSPRHGHVMVAAGTKLFIHGGLAGDRFYDDLHCIDISDMKWQKLNPTGAAPAGCAAHSAVAMGKHVYIFGGMTPAGALDTMYQYHTEEQHWTLLKFDTLLPPGRLDHSMCIIPWPVTCASEKEDSNSLTLNHEAEKEDSADKVMSHSGDSHEESQTATLLCLVFGGMNTEGEIYDDCIVTVVD.

Kelch repeat units follow at residues 49–95 (KVFI…FIPS), 100–146 (RIWV…TSSA), 151–200 (QLYV…VMVA), 204–250 (KLFI…SAVA), and 254–303 (HVYI…IIPW). Serine 133 is modified (phosphoserine). Residues 314–340 (SNSLTLNHEAEKEDSADKVMSHSGDSH) are disordered. Positions 321–340 (HEAEKEDSADKVMSHSGDSH) are enriched in basic and acidic residues.

As to quaternary structure, interacts with PIKFYVE; the interaction recruits RABEPK to the endosomal membrane. Interacts with RAB9 in its GTP-bound conformation. Phosphorylated on Ser residues by PIKFYVE.

The protein localises to the cytoplasm. It is found in the endosome membrane. In terms of biological role, rab9 effector required for endosome to trans-Golgi network (TGN) transport. The polypeptide is Rab9 effector protein with kelch motifs (Homo sapiens (Human)).